A 255-amino-acid chain; its full sequence is MKQSLRHQKIIKLVEQSGYLSTEELVAALDVSPQTIRRDLNILAELDLIRRHHGGAASPSSAENSDYVDRKQFFSLQKNNIAQEVAKLIPNGASLFIDIGTTPEAVANALLGHEKLRIVTNNLNAAHLLRQNESFDIVMAGGSLRMDGGIIGEATVNFISQFRLDFGILGISAIDADGSLLDYDYHEVQVKRAIIESSRQTLLVADHSKFTRQAIVRLGELSDVEYLFTGDVPEGIVNYLKEQKTKLVLCNGKVR.

The HTH deoR-type domain occupies 3–58; it reads QSLRHQKIIKLVEQSGYLSTEELVAALDVSPQTIRRDLNILAELDLIRRHHGGAAS. Residues 20–39 constitute a DNA-binding region (H-T-H motif); the sequence is LSTEELVAALDVSPQTIRRD.

Repressor of the glycerol-3-phosphate regulon. The polypeptide is Glycerol-3-phosphate regulon repressor (glpR) (Haemophilus influenzae (strain ATCC 51907 / DSM 11121 / KW20 / Rd)).